The chain runs to 357 residues: Adenylate isopentenyltransferase 1, chloroplastic (357 aa).

The transit peptide at 1–71 (MTELNFHLLP…NRKDKVVVIL (71 aa)) directs the protein to the chloroplast. A compositionally biased stretch (low complexity) spans 20–39 (TTTSPSFSSHSSSSSSLLSF). Positions 20 to 58 (TTTSPSFSSHSSSSSSLLSFTKRRRKHQPLVSSIRMEQS) are disordered. ATP is bound at residue 72–79 (GATGAGKS).

It belongs to the IPP transferase family. Expressed in the vascular stele of the roots, in the xylem precursor cell files in the root tip, in leaf axils, ovules, and immature seeds.

The protein localises to the plastid. It is found in the chloroplast. It carries out the reaction dimethylallyl diphosphate + AMP = N(6)-(dimethylallyl)adenosine 5'-phosphate + diphosphate. The enzyme catalyses dimethylallyl diphosphate + ADP = N(6)-(dimethylallyl)adenosine 5'-diphosphate + diphosphate. It catalyses the reaction dimethylallyl diphosphate + ATP = N(6)-(dimethylallyl)adenosine 5'-triphosphate + diphosphate. In terms of biological role, involved in cytokinin biosynthesis. Catalyzes the transfer of an isopentenyl group from dimethylallyl diphosphate (DMAPP) to ATP, ADP and AMP. Adenine, adenosine, isopentenylpyrophosphate and 1-hydroxy-2-methyl-2-(E)-butenyl 4-diphosphate (HMBDP) are not used as substrates. The sequence is that of Adenylate isopentenyltransferase 1, chloroplastic (IPT1) from Arabidopsis thaliana (Mouse-ear cress).